The sequence spans 381 residues: tRNA N6-adenosine threonylcarbamoyltransferase (381 aa).

Fe cation is bound by residues His-114 and His-118. Substrate-binding positions include 142–146 (VVSGG), Asp-178, Gly-191, Asp-195, and Asn-321. Asp-349 provides a ligand contact to Fe cation.

This sequence belongs to the KAE1 / TsaD family. It depends on Fe(2+) as a cofactor.

Its subcellular location is the cytoplasm. It catalyses the reaction L-threonylcarbamoyladenylate + adenosine(37) in tRNA = N(6)-L-threonylcarbamoyladenosine(37) in tRNA + AMP + H(+). Functionally, required for the formation of a threonylcarbamoyl group on adenosine at position 37 (t(6)A37) in tRNAs that read codons beginning with adenine. Is involved in the transfer of the threonylcarbamoyl moiety of threonylcarbamoyl-AMP (TC-AMP) to the N6 group of A37, together with TsaE and TsaB. TsaD likely plays a direct catalytic role in this reaction. The chain is tRNA N6-adenosine threonylcarbamoyltransferase from Koribacter versatilis (strain Ellin345).